Consider the following 510-residue polypeptide: Maturase K (510 aa).

The protein belongs to the intron maturase 2 family. MatK subfamily.

Its subcellular location is the plastid. It is found in the chloroplast. Usually encoded in the trnK tRNA gene intron. Probably assists in splicing its own and other chloroplast group II introns. This Anomochloa marantoidea (Herbaceous bamboo) protein is Maturase K.